The chain runs to 632 residues: MTTNYSAQEITVLKDLEPVQIRPGMYTDTTRPNHLAQEVIDNSVDEALAGFATKIEVILHPDQSIEVTDNGRGMPVDIHPTEGVSGVEVILTKLHAGGKFSNKNYEFAGGLHGVGISVVNALSERVDIQVKRNGEIYKIAFENGSKVEELEIIGTCGRRTTGTIVHFKPNPKYFDSAKFSVSRLRHLLRAKAVLCSGLEIKFIDKVNNTQDIWLYEDGLSDYLIEAVNGFETLPKKPFVGEFKGANEAVSWALLWLPEGGELIGESYVNLIPTIQGGTHVNGLRQGLLDAIREFCEFRNLLPRGVKLTADDIWDRCSYILSLKMQDAQFAGQTKERLSSRQSAVFVSGVLKDAFSLWLNQNVQDAEKLAEIAISSAQRRLRAAKKVVRKKLVSGPALPGKLADCGSQDLEKTELFLVEGDSAGGSAKQARDREYQAILPLRGKILNTWEVSPDQVLGSTEIHDIAVALGIDPDSNDLSQLRYGKVCILADADSDGLHIATLLCALFLRHFPKLVQDGHVYVAMPPLYRIDLNKEVFYALDENEKEAILDRLKNKKGKPNVQRFKGLGEMNPSQLRETTMDPNTRRLVQLTYDLGEDQGSDTLELMDMLLAKKRSEDRKNWLQAKGDQVDLSV.

ATP-binding positions include tyrosine 5, asparagine 42, aspartate 69, 110–116 (GLHGVGI), and lysine 334. The Toprim domain maps to 412-525 (TELFLVEGDS…DGHVYVAMPP (114 aa)). Mg(2+) is bound by residues glutamate 418, aspartate 490, and aspartate 492.

This sequence belongs to the type II topoisomerase family. ParE type 1 subfamily. Heterotetramer composed of ParC and ParE. The cofactor is Mg(2+). It depends on Mn(2+) as a cofactor. Ca(2+) is required as a cofactor.

The catalysed reaction is ATP-dependent breakage, passage and rejoining of double-stranded DNA.. In terms of biological role, topoisomerase IV is essential for chromosome segregation. It relaxes supercoiled DNA. Performs the decatenation events required during the replication of a circular DNA molecule. The protein is DNA topoisomerase 4 subunit B of Haemophilus influenzae (strain ATCC 51907 / DSM 11121 / KW20 / Rd).